A 511-amino-acid chain; its full sequence is Vesicular acetylcholine transporter (511 aa).

Residues 1–36 (MAVGQAKAAMGKISSAIGERSKRISGAMNEPRRKRK) are Cytoplasmic-facing. Residues 37 to 57 (ILLVIVCIAMLLDNMLYMVIV) form a helical membrane-spanning segment. The Lumenal, vesicle segment spans residues 58-108 (PIIPNYLETIRTYKLVYITTPSNGTNGSLLNSTQRAVLERNPNANEDIQIG). 3 N-linked (GlcNAc...) asparagine glycosylation sites follow: Asn80, Asn83, and Asn88. The chain crosses the membrane as a helical span at residues 109–129 (VLFASKAILQLLSNPFTGTFI). At 130-135 (DRVGYD) the chain is on the cytoplasmic side. A helical membrane pass occupies residues 136–156 (IPLLIGLTIMFFSTITFAFGE). Residues 157 to 165 (SYAILFAAR) are Lumenal, vesicle-facing. Residues 166 to 186 (SLQGLGSAFADTSGIAMIADK) traverse the membrane as a helical segment. Topologically, residues 187–197 (YTEESERTQAL) are cytoplasmic. The helical transmembrane segment at 198 to 218 (GIALAFISFGSLVAPPFGGVL) threads the bilayer. The Lumenal, vesicle portion of the chain corresponds to 219 to 225 (YQFAGKW). Residues 226–246 (VPFLVLSFVCLLDGILLLMVV) form a helical membrane-spanning segment. At 247–267 (TPFASRTRVNTLQGTPIYKLM) the chain is on the cytoplasmic side. The chain crosses the membrane as a helical span at residues 268–288 (IDPYIAVVAGALTTCNIPLAF). At 289–306 (LEPTISNWMKKTMNASEW) the chain is on the lumenal, vesicle side. Asn302 carries an N-linked (GlcNAc...) asparagine glycan. Residues 307 to 327 (QMGITWLPAFFPHILGVYITV) traverse the membrane as a helical segment. At 328–337 (KLAAKYPNYQ) the chain is on the cytoplasmic side. The chain crosses the membrane as a helical span at residues 338 to 358 (WLYGAVGLVIIGASSCTIPAC). Over 359–363 (RNFEE) the chain is Lumenal, vesicle. A helical membrane pass occupies residues 364–384 (LIIPLCALCFGIALVDTALLP). Topologically, residues 385–400 (TLAFLVDIRYVSVYGS) are cytoplasmic. Residues 401 to 421 (VYAIADISYSVAYALGPIMAG) traverse the membrane as a helical segment. Residues 422-428 (QIVHDLG) are Lumenal, vesicle-facing. Residues 429–449 (FVQLNLGMGLVNILYAPGLLF) traverse the membrane as a helical segment. Over 450-511 (LRNVCQMKPS…VLSDQEGYSE (62 aa)) the chain is Cytoplasmic. Residues 485-511 (EAKEPHGTSSGNHSVHAVLSDQEGYSE) are disordered.

Belongs to the major facilitator superfamily. Vesicular transporter family. In terms of tissue distribution, high expression in the electric lobe of the brain.

Its subcellular location is the membrane. In terms of biological role, involved in acetylcholine transport into synaptic vesicles. The sequence is that of Vesicular acetylcholine transporter from Torpedo marmorata (Marbled electric ray).